The chain runs to 257 residues: Phosphate import ATP-binding protein PstB (257 aa).

The region spanning 11-252 (FNISRLYLYI…PKNELTEKYV (242 aa)) is the ABC transporter domain. 43–50 (GPSGSGKS) serves as a coordination point for ATP.

Belongs to the ABC transporter superfamily. Phosphate importer (TC 3.A.1.7) family. As to quaternary structure, the complex is composed of two ATP-binding proteins (PstB), two transmembrane proteins (PstC and PstA) and a solute-binding protein (PstS).

Its subcellular location is the cell membrane. It carries out the reaction phosphate(out) + ATP + H2O = ADP + 2 phosphate(in) + H(+). In terms of biological role, part of the ABC transporter complex PstSACB involved in phosphate import. Responsible for energy coupling to the transport system. In Saccharolobus solfataricus (strain ATCC 35092 / DSM 1617 / JCM 11322 / P2) (Sulfolobus solfataricus), this protein is Phosphate import ATP-binding protein PstB.